Here is a 509-residue protein sequence, read N- to C-terminus: uncharacterized protein (509 aa).

The signal sequence occupies residues 1–32 (MMLPKRNIIHFLRKRAIFIVAAFIALLTVDYS).

It localises to the endoplasmic reticulum. This is an uncharacterized protein from Schizosaccharomyces pombe (strain 972 / ATCC 24843) (Fission yeast).